Consider the following 118-residue polypeptide: Ribosome-binding factor A (118 aa).

The protein belongs to the RbfA family. As to quaternary structure, monomer. Binds 30S ribosomal subunits, but not 50S ribosomal subunits or 70S ribosomes.

It localises to the cytoplasm. Functionally, one of several proteins that assist in the late maturation steps of the functional core of the 30S ribosomal subunit. Associates with free 30S ribosomal subunits (but not with 30S subunits that are part of 70S ribosomes or polysomes). Required for efficient processing of 16S rRNA. May interact with the 5'-terminal helix region of 16S rRNA. The chain is Ribosome-binding factor A from Geobacter sulfurreducens (strain ATCC 51573 / DSM 12127 / PCA).